Consider the following 962-residue polypeptide: Phagocyte signaling-impaired protein (962 aa).

TPR repeat units lie at residues 45 to 78, 79 to 112, and 523 to 560; these read LCAR…KPTD, DSTL…NPGN, and QIQL…FTNS. Residues 856-880 form a disordered region; that stretch reads TKVKKKQGDNKTQDTPQPVSEKERS.

It belongs to the MDM20/NAA25 family. In terms of assembly, component of the N-terminal acetyltransferase B (NatB) complex.

The protein localises to the lysosome. Functionally, non-catalytic subunit of the NatB complex which catalyzes acetylation of the N-terminal methionine residues of proteins beginning with Met-Asp or Met-Glu. Has 2 roles in the larval immune response: required both for the phagocytic degradation of internalized bacteria and for the induction of Defensin in the fat body. Within the phagocytic blood cells, has a role in detection of infection and activation of the humoral immune response. The protein is Phagocyte signaling-impaired protein of Drosophila pseudoobscura pseudoobscura (Fruit fly).